A 228-amino-acid chain; its full sequence is Translin (228 aa).

The interval 86 to 90 is DNA/RNA binding; that stretch reads RFHEH. Residues 177–198 are leucine-zipper; it reads LDSGFRLLNLKNDSLRKRYDGL. K187 is subject to N6-acetyllysine. Residue S190 is modified to Phosphoserine. An N6-acetyllysine modification is found at K199.

It belongs to the translin family. In terms of assembly, ring-shaped heterooctamer of six TSN and two TSNAX subunits, DNA/RNA binding occurs inside the ring.

It localises to the cytoplasm. Its subcellular location is the nucleus. Functionally, DNA-binding protein that specifically recognizes consensus sequences at the breakpoint junctions in chromosomal translocations, mostly involving immunoglobulin (Ig)/T-cell receptor gene segments. Seems to recognize single-stranded DNA ends generated by staggered breaks occurring at recombination hot spots. Its function is as follows. Exhibits both single-stranded and double-stranded endoribonuclease activity. May act as an activator of RNA-induced silencing complex (RISC) by facilitating endonucleolytic cleavage of the siRNA passenger strand. The chain is Translin (TSN) from Pongo abelii (Sumatran orangutan).